We begin with the raw amino-acid sequence, 358 residues long: Putative ZDHHC-type palmitoyltransferase 4 (358 aa).

Transmembrane regions (helical) follow at residues 28–48 (FVGF…TIIF), 57–77 (LFFI…TYGI), 171–191 (YFFL…AHSL), and 210–230 (LLVI…GSFG). One can recognise a DHHC domain in the interval 127-177 (SYCKKCSKAKPPRCHHCSVCDKCVLKMDHHCPWIGGCVGFYNYRYFFLFLS). N-linked (GlcNAc...) asparagine glycans are attached at residues Asn-255 and Asn-296. The disordered stretch occupies residues 302–358 (NNKNNENNENNENNEIDNHNNNNNNNNNNNNNEKEDNINENDNLISYDTDEYNRHKK). Low complexity predominate over residues 305–332 (NNENNENNENNEIDNHNNNNNNNNNNNN).

The protein belongs to the DHHC palmitoyltransferase family.

The protein resides in the membrane. It catalyses the reaction L-cysteinyl-[protein] + hexadecanoyl-CoA = S-hexadecanoyl-L-cysteinyl-[protein] + CoA. This Dictyostelium discoideum (Social amoeba) protein is Putative ZDHHC-type palmitoyltransferase 4.